The primary structure comprises 101 residues: Small ubiquitin-related modifier 1 (101 aa).

N-acetylserine is present on serine 2. Position 2 is a phosphoserine (serine 2). Lysine 7 participates in a covalent cross-link: Glycyl lysine isopeptide (Lys-Gly) (interchain with G-Cter in SUMO1); alternate. Lysine 7 participates in a covalent cross-link: Glycyl lysine isopeptide (Lys-Gly) (interchain with G-Cter in SUMO2); alternate. Serine 9 carries the phosphoserine modification. Glycyl lysine isopeptide (Lys-Gly) (interchain with G-Cter in SUMO2) cross-links involve residues lysine 16, lysine 17, and lysine 23. The interval 16 to 25 (KKEGEYIKLK) is (Microbial infection) Interaction with Tula hantavirus. The Ubiquitin-like domain maps to 20–97 (EYIKLKVIGQ…IEVYQEQTGG (78 aa)). Lysine 25 is covalently cross-linked (Glycyl lysine isopeptide (Lys-Gly) (interchain with G-Cter in SUMO1)). Phosphoserine is present on serine 32. Glycyl lysine isopeptide (Lys-Gly) (interchain with G-Cter in SUMO2) cross-links involve residues lysine 37, lysine 39, lysine 45, and lysine 46. Positions 37–40 (KVKM) are (Microbial infection) Interaction with Tula hantavirus. Residue glycine 97 forms a Glycyl lysine isopeptide (Gly-Lys) (interchain with K-? in acceptor proteins) linkage. The propeptide occupies 98-101 (HSTV).

This sequence belongs to the ubiquitin family. SUMO subfamily. In terms of assembly, covalently attached to KCNB1; UBE2I increases cross-linking with KCNB1 and PIAS1 decreases cross-links with KCNB1. Interacts with SAE2, RANBP2, PIAS1 and PIAS2. Interacts with PRKN. Covalently attached to a number of proteins such as IKFZ1, PML, RANGAP1, HIPK2, SP100, p53, p73-alpha, MDM2, JUN, DNMT3B and TDG. Also interacts with HIF1A, HIPK2, HIPK3, CHD3, EXOSC9, RAD51 and RAD52. Interacts with USP25 (via ts SIM domain); the interaction weakly sumoylates USP25. Interacts with SIMC1, CASP8AP2, RNF111 and SOBP (via SIM domains). Interacts with BHLHE40/DEC1. Interacts with RWDD3. Interacts with UBE2I/UBC9 and this interaction is enhanced in the presence of RWDD3. Interacts with MTA1. Interacts with SENP2. Interacts with HINT1. (Microbial infection) Interacts with Epstein-barr virus BGLF4. As to quaternary structure, (Microbial infection) Interacts (via N-terminus) with Tula hantavirus nucleoprotein. In terms of assembly, (Microbial infection) Interacts (via N-terminus) with Hantaan hantavirus nucleoprotein. In terms of processing, cleavage of precursor form by SENP1 or SENP2 is necessary for function. Post-translationally, polymeric SUMO1 chains undergo polyubiquitination by RNF4.

It is found in the nucleus membrane. Its subcellular location is the nucleus speckle. The protein resides in the cytoplasm. The protein localises to the nucleus. It localises to the PML body. It is found in the cell membrane. Ubiquitin-like protein that can be covalently attached to proteins as a monomer or a lysine-linked polymer. Covalent attachment via an isopeptide bond to its substrates requires prior activation by the E1 complex SAE1-SAE2 and linkage to the E2 enzyme UBE2I, and can be promoted by E3 ligases such as PIAS1-4, RANBP2 or CBX4. This post-translational modification on lysine residues of proteins plays a crucial role in a number of cellular processes such as nuclear transport, DNA replication and repair, mitosis and signal transduction. Involved for instance in targeting RANGAP1 to the nuclear pore complex protein RANBP2. Covalently attached to the voltage-gated potassium channel KCNB1; this modulates the gating characteristics of KCNB1. Polymeric SUMO1 chains are also susceptible to polyubiquitination which functions as a signal for proteasomal degradation of modified proteins. May also regulate a network of genes involved in palate development. Covalently attached to ZFHX3. This is Small ubiquitin-related modifier 1 (SUMO1) from Homo sapiens (Human).